A 239-amino-acid polypeptide reads, in one-letter code: Adenylate dimethylallyltransferase (239 aa).

This sequence belongs to the isopentenyl transferase family.

The enzyme catalyses dimethylallyl diphosphate + AMP = N(6)-(dimethylallyl)adenosine 5'-phosphate + diphosphate. In terms of biological role, transfers dimethylallyl groups to AMP as part of the biosynthesis of cytokinin phytohormones. The protein is Adenylate dimethylallyltransferase (ipt) of Rhizobium radiobacter (Agrobacterium tumefaciens).